The primary structure comprises 104 residues: Ribonuclease P protein component 4 (104 aa).

The Zn(2+) site is built by Cys63, Cys66, Cys89, and Cys92.

This sequence belongs to the eukaryotic/archaeal RNase P protein component 4 family. In terms of assembly, consists of a catalytic RNA component and at least 4-5 protein subunits. It depends on Zn(2+) as a cofactor.

Its subcellular location is the cytoplasm. The enzyme catalyses Endonucleolytic cleavage of RNA, removing 5'-extranucleotides from tRNA precursor.. Its function is as follows. Part of ribonuclease P, a protein complex that generates mature tRNA molecules by cleaving their 5'-ends. This Methanosphaera stadtmanae (strain ATCC 43021 / DSM 3091 / JCM 11832 / MCB-3) protein is Ribonuclease P protein component 4.